The following is a 77-amino-acid chain: Translation initiation factor IF-1, chloroplastic (77 aa).

The region spanning 1–71 (MKEQKWIHEG…TRGRIIYRLR (71 aa)) is the S1-like domain.

This sequence belongs to the IF-1 family. Component of the 30S ribosomal translation pre-initiation complex which assembles on the 30S ribosome in the order IF-2 and IF-3, IF-1 and N-formylmethionyl-tRNA(fMet); mRNA recruitment can occur at any time during PIC assembly.

It localises to the plastid. The protein localises to the chloroplast. Functionally, one of the essential components for the initiation of protein synthesis. Stabilizes the binding of IF-2 and IF-3 on the 30S subunit to which N-formylmethionyl-tRNA(fMet) subsequently binds. Helps modulate mRNA selection, yielding the 30S pre-initiation complex (PIC). Upon addition of the 50S ribosomal subunit IF-1, IF-2 and IF-3 are released leaving the mature 70S translation initiation complex. The protein is Translation initiation factor IF-1, chloroplastic of Daucus carota (Wild carrot).